The sequence spans 525 residues: Probable protein kinase UbiB (525 aa).

A Protein kinase domain is found at 118 to 500 (EFERVPVASA…QRRTNRLLQA (383 aa)). Residues 124–132 (VASASIAQV) and Lys-150 contribute to the ATP site. Catalysis depends on Asp-285, which acts as the Proton acceptor. The helical transmembrane segment at 501–521 (LLVFGLAVGAGAVIARVLIVL) threads the bilayer.

The protein belongs to the ABC1 family. UbiB subfamily.

The protein localises to the cell inner membrane. Its pathway is cofactor biosynthesis; ubiquinone biosynthesis [regulation]. Is probably a protein kinase regulator of UbiI activity which is involved in aerobic coenzyme Q (ubiquinone) biosynthesis. This chain is Probable protein kinase UbiB, found in Burkholderia mallei (strain SAVP1).